Consider the following 397-residue polypeptide: Myb family transcription factor PHL4 (397 aa).

A disordered region spans residues methionine 1–asparagine 27. In terms of domain architecture, HTH myb-type spans alanine 228 to tyrosine 288. A DNA-binding region (H-T-H motif) is located at residues proline 259 to arginine 284. Residues threonine 319–leucine 339 form a coiled coil region. Positions leucine 332–glutamate 337 match the LHEQLE motif. The segment at lysine 359–glutamate 397 is disordered. Residues glutamate 386–glutamate 397 are compositionally biased toward basic and acidic residues. At serine 387 the chain carries Phosphoserine.

The protein belongs to the MYB-CC family.

The protein resides in the nucleus. Its function is as follows. Transcription factor involved in male gametophyte development. This Arabidopsis thaliana (Mouse-ear cress) protein is Myb family transcription factor PHL4.